A 376-amino-acid polypeptide reads, in one-letter code: N-acetyldiaminopimelate deacetylase (376 aa).

Aspartate 70 is a catalytic residue. The active-site Proton acceptor is glutamate 129.

This sequence belongs to the peptidase M20A family. N-acetyldiaminopimelate deacetylase subfamily.

It catalyses the reaction N-acetyl-(2S,6S)-2,6-diaminopimelate + H2O = (2S,6S)-2,6-diaminopimelate + acetate. It functions in the pathway amino-acid biosynthesis; L-lysine biosynthesis via DAP pathway; LL-2,6-diaminopimelate from (S)-tetrahydrodipicolinate (acetylase route): step 3/3. Functionally, catalyzes the conversion of N-acetyl-diaminopimelate to diaminopimelate and acetate. The sequence is that of N-acetyldiaminopimelate deacetylase from Bacillus pumilus (strain SAFR-032).